The primary structure comprises 688 residues: Elongation factor G (688 aa).

One can recognise a tr-type G domain in the interval 8–282 (EKTRNIGIIA…AVVDYLPAPC (275 aa)). Residues 17-24 (AHIDAGKT), 81-85 (DTPGH), and 135-138 (NKMD) each bind GTP.

This sequence belongs to the TRAFAC class translation factor GTPase superfamily. Classic translation factor GTPase family. EF-G/EF-2 subfamily.

It is found in the cytoplasm. In terms of biological role, catalyzes the GTP-dependent ribosomal translocation step during translation elongation. During this step, the ribosome changes from the pre-translocational (PRE) to the post-translocational (POST) state as the newly formed A-site-bound peptidyl-tRNA and P-site-bound deacylated tRNA move to the P and E sites, respectively. Catalyzes the coordinated movement of the two tRNA molecules, the mRNA and conformational changes in the ribosome. The polypeptide is Elongation factor G (Aster yellows witches'-broom phytoplasma (strain AYWB)).